A 275-amino-acid chain; its full sequence is uncharacterized protein (275 aa).

The stretch at 75–157 forms a coiled coil; that stretch reads AKELIKNRRL…AELKQAAEQG (83 aa).

This is an uncharacterized protein from Bacillus subtilis (strain 168).